We begin with the raw amino-acid sequence, 503 residues long: Aspartyl/glutamyl-tRNA(Asn/Gln) amidotransferase subunit B (503 aa).

It belongs to the GatB/GatE family. GatB subfamily. As to quaternary structure, heterotrimer of A, B and C subunits.

The catalysed reaction is L-glutamyl-tRNA(Gln) + L-glutamine + ATP + H2O = L-glutaminyl-tRNA(Gln) + L-glutamate + ADP + phosphate + H(+). It carries out the reaction L-aspartyl-tRNA(Asn) + L-glutamine + ATP + H2O = L-asparaginyl-tRNA(Asn) + L-glutamate + ADP + phosphate + 2 H(+). In terms of biological role, allows the formation of correctly charged Asn-tRNA(Asn) or Gln-tRNA(Gln) through the transamidation of misacylated Asp-tRNA(Asn) or Glu-tRNA(Gln) in organisms which lack either or both of asparaginyl-tRNA or glutaminyl-tRNA synthetases. The reaction takes place in the presence of glutamine and ATP through an activated phospho-Asp-tRNA(Asn) or phospho-Glu-tRNA(Gln). The sequence is that of Aspartyl/glutamyl-tRNA(Asn/Gln) amidotransferase subunit B from Cereibacter sphaeroides (strain ATCC 17023 / DSM 158 / JCM 6121 / CCUG 31486 / LMG 2827 / NBRC 12203 / NCIMB 8253 / ATH 2.4.1.) (Rhodobacter sphaeroides).